The primary structure comprises 210 residues: Thymidylate kinase (210 aa).

An ATP-binding site is contributed by 10 to 17 (GPEGAGKS).

Belongs to the thymidylate kinase family.

The catalysed reaction is dTMP + ATP = dTDP + ADP. Its function is as follows. Phosphorylation of dTMP to form dTDP in both de novo and salvage pathways of dTTP synthesis. The sequence is that of Thymidylate kinase from Pseudomonas fluorescens (strain Pf0-1).